Here is a 467-residue protein sequence, read N- to C-terminus: UDP-N-acetylmuramate--L-alanine ligase (467 aa).

Position 121-127 (121-127) interacts with ATP; it reads GSHGKTT.

It belongs to the MurCDEF family.

Its subcellular location is the cytoplasm. It catalyses the reaction UDP-N-acetyl-alpha-D-muramate + L-alanine + ATP = UDP-N-acetyl-alpha-D-muramoyl-L-alanine + ADP + phosphate + H(+). The protein operates within cell wall biogenesis; peptidoglycan biosynthesis. Cell wall formation. The chain is UDP-N-acetylmuramate--L-alanine ligase from Parasynechococcus marenigrum (strain WH8102).